A 51-amino-acid polypeptide reads, in one-letter code: Large ribosomal subunit protein eL39 (51 aa).

The protein belongs to the eukaryotic ribosomal protein eL39 family.

The chain is Large ribosomal subunit protein eL39 from Methanococcus aeolicus (strain ATCC BAA-1280 / DSM 17508 / OCM 812 / Nankai-3).